A 501-amino-acid polypeptide reads, in one-letter code: MENLTTAQFLHRATLLKKPPPPPWNLNSSFLTSTSYSIPRPSSLRRSLPLSINGDATQPTSLLHHHRFLSSLTRRLSLSGSCPLRLLQEDGDWSKDHFWAVIRFLRQSSRLHEILPVFDTWKNLEPSRISENNYERIIRFLCEEKSMSEAIRAFRSMIDDHELSPSLEIYNSIIHSYADDGKFEEAMFYLNHMKENGLLPITETYDGLIEAYGKWKMYDEIVLCLKRMESDGCVRDHVTYNLLIREFSRGGLLKRMEQMYQSLMSRKMTLEPSTLLSMLEAYAEFGLIEKMEETCNKIIRFGISLDEGLVRKLANVYIENLMFSRLDDLGRGISASRTRRTELAWCLRLLCHARLVSRKGLDYVVKEMEEARVPWNTTFANIALLAYSKMGDFTSIELLLSELRIKHVKLDLVTVGIVFDLSEARFDGTGVFMTWKKIGFLDKPVEMKTDPLVHAAFGKGQFLRSCEEVKNQSLGTRDGESKSWTYQYLMELVVKNQKTVP.

Residues 1-88 (MENLTTAQFL…SGSCPLRLLQ (88 aa)) constitute a chloroplast transit peptide. PPR repeat units lie at residues 130–160 (SENN…MIDD), 166–200 (SLEI…GLLP), 201–235 (ITET…GCVR), 236–270 (DHVT…KMTL), and 271–305 (EPST…GISL).

This sequence belongs to the PPR family. P subfamily.

It localises to the plastid. It is found in the chloroplast. The sequence is that of Pentatricopeptide repeat-containing protein At4g14190, chloroplastic from Arabidopsis thaliana (Mouse-ear cress).